A 531-amino-acid polypeptide reads, in one-letter code: Ceramide kinase (531 aa).

The segment at 1–115 (MGAMGAAEPL…SADEQLCHLW (115 aa)) is essential for enzyme activity. The segment at 1–125 (MGAMGAAEPL…LQTLRGLLES (125 aa)) is required for binding to sulfatide and phosphoinositides. A DAGKc domain is found at 128 to 278 (SRPKHLLVFI…IDVSSVHYHN (151 aa)). ATP-binding positions include 138-140 (NPF) and 170-174 (TEHAN). 195-198 (GGDG) serves as a coordination point for substrate. D197 functions as the Proton donor/acceptor in the catalytic mechanism. Residues E202, 239-241 (GST), R304, and R310 contribute to the ATP site. A phosphoserine mark is found at S340 and S408. Residue 502–504 (DGE) coordinates ATP.

It depends on Ca(2+) as a cofactor. Mg(2+) serves as cofactor. In terms of tissue distribution, high level expression in heart, brain, testis and pancreas; low expression in spleen, liver and lung; not detected in skeletal muscle.

The protein localises to the cytoplasm. Its subcellular location is the cell membrane. It catalyses the reaction an N-acylsphing-4-enine + ATP = an N-acylsphing-4-enine 1-phosphate + ADP + H(+). The enzyme catalyses N-(hexanoyl)sphing-4-enine + ATP = N-hexanoylsphing-4-enine 1-phosphate + ADP + H(+). It carries out the reaction N-(acetyl)-sphing-4-enine + ATP = N-(acetyl)-sphing-4-enine-1-phosphate + ADP + H(+). The catalysed reaction is N-hexadecanoylsphing-4-enine + ATP = N-(hexadecanoyl)-sphing-4-enine-1-phosphate + ADP + H(+). It catalyses the reaction N-hexanoyl-(4R)-hydroxysphinganine + ATP = N-hexanoyl-(4R)-hydroxysphinganine-1-phosphate + ADP + H(+). Functionally, catalyzes specifically the phosphorylation of ceramide to form ceramide 1-phosphate. Acts efficiently on natural and analog ceramides (C6, C8, C16 ceramides, and C8-dihydroceramide), to a lesser extent on C2-ceramide and C6-dihydroceramide, but not on other lipids, such as various sphingosines. Shows a greater preference for D-erythro isomer of ceramides. Binds phosphoinositides. The polypeptide is Ceramide kinase (Cerk) (Mus musculus (Mouse)).